We begin with the raw amino-acid sequence, 101 residues long: Small ribosomal subunit protein uS10 (101 aa).

Belongs to the universal ribosomal protein uS10 family. In terms of assembly, part of the 30S ribosomal subunit.

Involved in the binding of tRNA to the ribosomes. The chain is Small ribosomal subunit protein uS10 from Brachyspira hyodysenteriae (Treponema hyodysenteriae).